The primary structure comprises 289 residues: ATP synthase gamma chain (289 aa).

The protein belongs to the ATPase gamma chain family. As to quaternary structure, F-type ATPases have 2 components, CF(1) - the catalytic core - and CF(0) - the membrane proton channel. CF(1) has five subunits: alpha(3), beta(3), gamma(1), delta(1), epsilon(1). CF(0) has three main subunits: a, b and c.

The protein localises to the cell inner membrane. Produces ATP from ADP in the presence of a proton gradient across the membrane. The gamma chain is believed to be important in regulating ATPase activity and the flow of protons through the CF(0) complex. This chain is ATP synthase gamma chain, found in Mannheimia succiniciproducens (strain KCTC 0769BP / MBEL55E).